Consider the following 420-residue polypeptide: Sulfate adenylyltransferase (420 aa).

Ala-2 is subject to N-acetylalanine.

It belongs to the sulfate adenylyltransferase family. Mg(2+) is required as a cofactor.

It carries out the reaction sulfate + ATP + H(+) = adenosine 5'-phosphosulfate + diphosphate. Its pathway is sulfur metabolism; hydrogen sulfide biosynthesis; sulfite from sulfate: step 1/3. With respect to regulation, inhibited by adenosine 5'-phosphosulfate (APS), but not by 3'phosphoadenosine 5'-phosphosulfate (PAPS). Inhibited by AMP, ADP, CTP, GTP, ITP, UTP and anions other than those in group IV. The chain is Sulfate adenylyltransferase from Pyropia yezoensis (Susabi-nori).